We begin with the raw amino-acid sequence, 207 residues long: LexA repressor (207 aa).

Positions 28–48 form a DNA-binding region, H-T-H motif; it reads VREIGEAVGLASSSTVHGHLA. Catalysis depends on for autocatalytic cleavage activity residues serine 129 and lysine 167.

Belongs to the peptidase S24 family. As to quaternary structure, homodimer.

The catalysed reaction is Hydrolysis of Ala-|-Gly bond in repressor LexA.. Its function is as follows. Represses a number of genes involved in the response to DNA damage (SOS response), including recA and lexA. In the presence of single-stranded DNA, RecA interacts with LexA causing an autocatalytic cleavage which disrupts the DNA-binding part of LexA, leading to derepression of the SOS regulon and eventually DNA repair. In Brevibacillus brevis (strain 47 / JCM 6285 / NBRC 100599), this protein is LexA repressor.